Here is a 201-residue protein sequence, read N- to C-terminus: Peptide deformylase (201 aa).

Positions 92 and 134 each coordinate Fe cation. Residue glutamate 135 is part of the active site. Histidine 138 provides a ligand contact to Fe cation.

The protein belongs to the polypeptide deformylase family. Requires Fe(2+) as cofactor.

The enzyme catalyses N-terminal N-formyl-L-methionyl-[peptide] + H2O = N-terminal L-methionyl-[peptide] + formate. Functionally, removes the formyl group from the N-terminal Met of newly synthesized proteins. Requires at least a dipeptide for an efficient rate of reaction. N-terminal L-methionine is a prerequisite for activity but the enzyme has broad specificity at other positions. The chain is Peptide deformylase from Rhodopirellula baltica (strain DSM 10527 / NCIMB 13988 / SH1).